The primary structure comprises 285 residues: Dihydropteroate synthase (285 aa).

The 259-residue stretch at Pro-18 to Lys-276 folds into the Pterin-binding domain. Asn-25 lines the Mg(2+) pocket. Residues Thr-66, Asp-99, Asn-119, Asp-190, Lys-229, and Arg-264 to His-266 contribute to the (7,8-dihydropterin-6-yl)methyl diphosphate site.

The protein belongs to the DHPS family. Homodimer. Requires Mg(2+) as cofactor.

The catalysed reaction is (7,8-dihydropterin-6-yl)methyl diphosphate + 4-aminobenzoate = 7,8-dihydropteroate + diphosphate. It functions in the pathway cofactor biosynthesis; tetrahydrofolate biosynthesis; 7,8-dihydrofolate from 2-amino-4-hydroxy-6-hydroxymethyl-7,8-dihydropteridine diphosphate and 4-aminobenzoate: step 1/2. In terms of biological role, catalyzes the condensation of para-aminobenzoate (pABA) with 6-hydroxymethyl-7,8-dihydropterin diphosphate (DHPt-PP) to form 7,8-dihydropteroate (H2Pte), the immediate precursor of folate derivatives. This Neisseria meningitidis serogroup B (strain ATCC BAA-335 / MC58) protein is Dihydropteroate synthase (folP).